Consider the following 179-residue polypeptide: MARLFDHYKNIVIKELIQQFNYKTVMQVPKITKITLNMGVGEAAVDKKIMENAVSDLEKISAQKPIITKAKKSIATFKIRQGYPVGCMVTLRGIKMYEFLDRLVSIAIPRIRDFRGIGGKGFDGHGNFNMGIKEQIIFPEIDYDKIDKLRGLNITMTTTAKTDIEAKALLSAFKFPFKN.

Belongs to the universal ribosomal protein uL5 family. As to quaternary structure, part of the 50S ribosomal subunit; part of the 5S rRNA/L5/L18/L25 subcomplex. Contacts the 5S rRNA and the P site tRNA. Forms a bridge to the 30S subunit in the 70S ribosome.

Functionally, this is one of the proteins that bind and probably mediate the attachment of the 5S RNA into the large ribosomal subunit, where it forms part of the central protuberance. In the 70S ribosome it contacts protein S13 of the 30S subunit (bridge B1b), connecting the 2 subunits; this bridge is implicated in subunit movement. Contacts the P site tRNA; the 5S rRNA and some of its associated proteins might help stabilize positioning of ribosome-bound tRNAs. This Nitrosomonas eutropha (strain DSM 101675 / C91 / Nm57) protein is Large ribosomal subunit protein uL5.